The following is a 526-amino-acid chain: CTP synthase (526 aa).

The amidoligase domain stretch occupies residues 1–270 (MKYIFVTGGV…ADVLSTHLGL (270 aa)). Serine 12 provides a ligand contact to CTP. Residue serine 12 coordinates UTP. ATP is bound by residues 13 to 18 (GLGKGI) and aspartate 70. Mg(2+) contacts are provided by aspartate 70 and glutamate 145. CTP-binding positions include 152–154 (DIE), 191–196 (KTKPTQ), and lysine 227. Residues 191–196 (KTKPTQ) and lysine 227 each bind UTP. The 233-residue stretch at 293–525 (VAIVSKYGIE…VEACRANKRT (233 aa)) folds into the Glutamine amidotransferase type-1 domain. Glycine 349 is a binding site for L-glutamine. The Nucleophile; for glutamine hydrolysis role is filled by cysteine 376. L-glutamine-binding positions include 377–380 (LGFQ), glutamate 400, and arginine 455. Residues histidine 498 and glutamate 500 contribute to the active site.

The protein belongs to the CTP synthase family. In terms of assembly, homotetramer.

It carries out the reaction UTP + L-glutamine + ATP + H2O = CTP + L-glutamate + ADP + phosphate + 2 H(+). The catalysed reaction is L-glutamine + H2O = L-glutamate + NH4(+). The enzyme catalyses UTP + NH4(+) + ATP = CTP + ADP + phosphate + 2 H(+). The protein operates within pyrimidine metabolism; CTP biosynthesis via de novo pathway; CTP from UDP: step 2/2. Allosterically activated by GTP, when glutamine is the substrate; GTP has no effect on the reaction when ammonia is the substrate. The allosteric effector GTP functions by stabilizing the protein conformation that binds the tetrahedral intermediate(s) formed during glutamine hydrolysis. Inhibited by the product CTP, via allosteric rather than competitive inhibition. Functionally, catalyzes the ATP-dependent amination of UTP to CTP with either L-glutamine or ammonia as the source of nitrogen. Regulates intracellular CTP levels through interactions with the four ribonucleotide triphosphates. The sequence is that of CTP synthase from Methanoregula boonei (strain DSM 21154 / JCM 14090 / 6A8).